A 245-amino-acid chain; its full sequence is Eukaryotic translation initiation factor 3 subunit K (245 aa).

One can recognise a PCI domain in the interval 46 to 227 (YDCYANLALL…EAKGTVVREN (182 aa)).

It belongs to the eIF-3 subunit K family. Component of the eukaryotic translation initiation factor 3 (eIF-3) complex.

It is found in the cytoplasm. In terms of biological role, component of the eukaryotic translation initiation factor 3 (eIF-3) complex, which is involved in protein synthesis of a specialized repertoire of mRNAs and, together with other initiation factors, stimulates binding of mRNA and methionyl-tRNAi to the 40S ribosome. The eIF-3 complex specifically targets and initiates translation of a subset of mRNAs involved in cell proliferation. The sequence is that of Eukaryotic translation initiation factor 3 subunit K from Sclerotinia sclerotiorum (strain ATCC 18683 / 1980 / Ss-1) (White mold).